The sequence spans 127 residues: Sulfiredoxin (127 aa).

This sequence belongs to the sulfiredoxin family. Mg(2+) serves as cofactor. Post-translationally, forms a transient disulfide bond with TSA1 during the reduction of cysteine sulfinic acid (-SO2H).

It localises to the cytoplasm. Its subcellular location is the nucleus. The enzyme catalyses S-hydroxy-S-oxy-L-cysteinyl-[peroxiredoxin] + [protein]-dithiol + ATP = S-hydroxy-L-cysteinyl-[peroxiredoxin] + [protein]-disulfide + ADP + phosphate. Functionally, contributes to oxidative stress resistance by reducing cysteine-sulfinic acid formed under exposure to oxidants in the peroxiredoxin TSA1. May catalyze the reduction in a multi-step process by acting both as a specific phosphotransferase and as thioltransferase. The protein is Sulfiredoxin of Saccharomyces cerevisiae (strain ATCC 204508 / S288c) (Baker's yeast).